The following is a 92-amino-acid chain: UPF0250 protein Pmen_3793 (92 aa).

It belongs to the UPF0250 family.

The chain is UPF0250 protein Pmen_3793 from Ectopseudomonas mendocina (strain ymp) (Pseudomonas mendocina).